The chain runs to 172 residues: Small ribosomal subunit protein uS5 (172 aa).

Residues 17–80 enclose the S5 DRBM domain; that stretch reads LREKMISVNR…DEARRKMVKV (64 aa).

The protein belongs to the universal ribosomal protein uS5 family. As to quaternary structure, part of the 30S ribosomal subunit. Contacts proteins S4 and S8.

Functionally, with S4 and S12 plays an important role in translational accuracy. Its function is as follows. Located at the back of the 30S subunit body where it stabilizes the conformation of the head with respect to the body. In Cupriavidus metallidurans (strain ATCC 43123 / DSM 2839 / NBRC 102507 / CH34) (Ralstonia metallidurans), this protein is Small ribosomal subunit protein uS5.